We begin with the raw amino-acid sequence, 437 residues long: 3-phosphoshikimate 1-carboxyvinyltransferase (437 aa).

Residues lysine 28, serine 29, and arginine 33 each contribute to the 3-phosphoshikimate site. Residue lysine 28 coordinates phosphoenolpyruvate. 2 residues coordinate phosphoenolpyruvate: glycine 97 and arginine 125. 5 residues coordinate 3-phosphoshikimate: serine 168, serine 169, glutamine 170, glutamate 316, and histidine 343. Glutamine 170 lines the phosphoenolpyruvate pocket. The active-site Proton acceptor is glutamate 316. Residues arginine 347, arginine 388, and lysine 413 each coordinate phosphoenolpyruvate.

The protein belongs to the EPSP synthase family. In terms of assembly, monomer.

Its subcellular location is the cytoplasm. The enzyme catalyses 3-phosphoshikimate + phosphoenolpyruvate = 5-O-(1-carboxyvinyl)-3-phosphoshikimate + phosphate. The protein operates within metabolic intermediate biosynthesis; chorismate biosynthesis; chorismate from D-erythrose 4-phosphate and phosphoenolpyruvate: step 6/7. In terms of biological role, catalyzes the transfer of the enolpyruvyl moiety of phosphoenolpyruvate (PEP) to the 5-hydroxyl of shikimate-3-phosphate (S3P) to produce enolpyruvyl shikimate-3-phosphate and inorganic phosphate. In Rhodococcus erythropolis (strain PR4 / NBRC 100887), this protein is 3-phosphoshikimate 1-carboxyvinyltransferase.